The primary structure comprises 189 residues: Chitin synthase 2 (189 aa).

Belongs to the chitin synthase family. Class II subfamily.

The protein localises to the cell membrane. The enzyme catalyses [(1-&gt;4)-N-acetyl-beta-D-glucosaminyl](n) + UDP-N-acetyl-alpha-D-glucosamine = [(1-&gt;4)-N-acetyl-beta-D-glucosaminyl](n+1) + UDP + H(+). Polymerizes chitin, a structural polymer of the cell wall and septum, by transferring the sugar moiety of UDP-GlcNAc to the non-reducing end of the growing chitin polymer. The chain is Chitin synthase 2 (CHS2) from Ajellomyces dermatitidis (Blastomyces dermatitidis).